The following is a 528-amino-acid chain: Coiled-coil domain-containing protein 116 (528 aa).

Positions 43–68 (GHVPHPPSTCGSSALQNQRRNKRHPQ) are disordered. A compositionally biased stretch (polar residues) spans 51 to 60 (TCGSSALQNQ). The stretch at 81–104 (HVLDSLETVVEKATERMAAMKTEA) forms a coiled coil. Disordered stretches follow at residues 335 to 444 (PLFP…RQRA) and 497 to 528 (SSSP…THHS). Over residues 363 to 378 (PTNSGQPHPTVSSPKT) the composition is skewed to polar residues. Ser-389 is subject to Phosphoserine. A compositionally biased stretch (basic and acidic residues) spans 419 to 429 (HSREKEPDSDP). Residues 434–443 (PPVSLSSRQR) show a composition bias toward polar residues. Residues 497–510 (SSSPSSLCPEVTSS) show a composition bias toward low complexity.

Its subcellular location is the cytoplasm. It is found in the cytoskeleton. The protein resides in the microtubule organizing center. It localises to the centrosome. The sequence is that of Coiled-coil domain-containing protein 116 (CCDC116) from Macaca fascicularis (Crab-eating macaque).